A 352-amino-acid chain; its full sequence is C-C chemokine receptor type 5 (352 aa).

Residues 1 to 30 lie on the Extracellular side of the membrane; that stretch reads MDYQVSSPTYDIDYYTSEPCQKVNVKQIAA. Tyr3 carries the post-translational modification Sulfotyrosine. Ser6 and Ser7 each carry an O-linked (GalNAc...) serine glycan. A sulfotyrosine mark is found at Tyr10, Tyr14, and Tyr15. 2 cysteine pairs are disulfide-bonded: Cys20/Cys269 and Cys101/Cys178. Residues 31–58 form a helical membrane-spanning segment; it reads RLLPPLYSLVFIFGFVGNILVVLILINC. The Cytoplasmic segment spans residues 59 to 68; it reads KRLKSMTDIY. The chain crosses the membrane as a helical span at residues 69–89; sequence LLNLAISDLFFLLTVPFWAHY. Over 90-102 the chain is Extracellular; that stretch reads AAAQWDFGNTMCQ. A helical membrane pass occupies residues 103-124; sequence LLTGLYFIGFFSGIFFIILLTI. At 125–141 the chain is on the cytoplasmic side; sequence DRYLAIVHAVFALKART. The chain crosses the membrane as a helical span at residues 142 to 166; the sequence is VTFGVVTSVITWVVAVFASLPGIIF. The Extracellular segment spans residues 167-198; it reads TRSQREGLHYTCSSHFPYSQYQFWKNFQTLKI. The helical transmembrane segment at 199 to 218 threads the bilayer; it reads VILGLVLPLLVMVICYSGIL. At 219 to 235 the chain is on the cytoplasmic side; that stretch reads KTLLRCRNEKKRHRAVR. The chain crosses the membrane as a helical span at residues 236–260; that stretch reads LIFTIMIVYFLFWAPYNIVLLLNTF. Topologically, residues 261 to 277 are extracellular; it reads QEFFGLNNCSSSNRLDQ. A helical transmembrane segment spans residues 278–301; it reads AMQVTETLGMTHCCINPIIYAFVG. The Cytoplasmic portion of the chain corresponds to 302 to 352; that stretch reads EKFRNYLLVFFQKHIAKRFCKCCYIFQQEAPERASSVYTRSTGEQEISVGL. S-palmitoyl cysteine attachment occurs at residues Cys321, Cys323, and Cys324. Residues Ser336, Ser337, Ser342, and Ser349 each carry the phosphoserine; by BARK1 modification.

This sequence belongs to the G-protein coupled receptor 1 family. Interacts with PRAF2. Efficient ligand binding to CCL3/MIP-1alpha and CCL4/MIP-1beta requires sulfation, O-glycosylation and sialic acid modifications. Glycosylation on Ser-6 is required for efficient binding of CCL4. Interacts with GRK2. Interacts with ARRB1 and ARRB2. Interacts with CNIH4. Interacts with S100A4; this interaction stimulates T-lymphocyte chemotaxis. Post-translationally, sulfated on at least 2 of the N-terminal tyrosines. Sulfation is required for efficient binding of the chemokines, CCL3 and CCL4. Palmitoylation in the C-terminal is important for cell surface expression. In terms of processing, phosphorylation on serine residues in the C-terminal is stimulated by binding CC chemokines especially by APO-RANTES. Post-translationally, O-glycosylated, but not N-glycosylated. Ser-6 appears to be the major site even if Ser-7 may be also O-glycosylated. Also sialylated glycans present which contribute to chemokine binding. Thr-16 and Ser-17 may also be glycosylated and, if so, with small moieties such as a T-antigen.

It is found in the cell membrane. Functionally, receptor for a number of inflammatory CC-chemokines including CCL3/MIP-1-alpha, CCL4/MIP-1-beta and RANTES and subsequently transduces a signal by increasing the intracellular calcium ion level. May play a role in the control of granulocytic lineage proliferation or differentiation. Participates in T-lymphocyte migration to the infection site by acting as a chemotactic receptor. The polypeptide is C-C chemokine receptor type 5 (CCR5) (Rhinopithecus bieti (Black snub-nosed monkey)).